Reading from the N-terminus, the 606-residue chain is NADH-ubiquinone oxidoreductase chain 5 (606 aa).

Helical transmembrane passes span 4–24 (FSSLMLASLSVLTLPIMSSIL), 38–58 (NIISYAFITSLIPTMMFIHSG), 87–107 (MIFVPVALFVTWSIMEFSLWY), 117–137 (FFKYLLTFLITMMILVTANNL), 140–160 (LFIGWEGVGIMSFLLIGWWYG), 171–191 (AILYNRIGDIGFIMAMAWFLF), 211–233 (LPLLGLLLAATGKSAQFGLHPWL), 241–261 (TPVSALLHSSTMVVAGVFLLI), 273–293 (IQSLTLCLGAITTLFTAICAL), 301–320 (IIAFSTSSQLGLMIVTIGIN), 325–347 (AFLHICTHAFFKAMLFMCSGSII), 366–386 (MPFTTTSLIIGSLALTGMPFL), 413–433 (LIATSLTAVYSTRIIFFALLG), 457–477 (LLIGSIFAGFFISNNIYPTTI), 488–508 (LTALTVTILGFTLALELSLIT), and 584–604 (IKLYFLSFLITLTLSMLLFNL).

The protein belongs to the complex I subunit 5 family. As to quaternary structure, core subunit of respiratory chain NADH dehydrogenase (Complex I) which is composed of 45 different subunits.

The protein resides in the mitochondrion inner membrane. The catalysed reaction is a ubiquinone + NADH + 5 H(+)(in) = a ubiquinol + NAD(+) + 4 H(+)(out). Functionally, core subunit of the mitochondrial membrane respiratory chain NADH dehydrogenase (Complex I) which catalyzes electron transfer from NADH through the respiratory chain, using ubiquinone as an electron acceptor. Essential for the catalytic activity and assembly of complex I. The protein is NADH-ubiquinone oxidoreductase chain 5 (MT-ND5) of Equus asinus (Donkey).